A 287-amino-acid chain; its full sequence is Bifunctional protein FolD (287 aa).

NADP(+) contacts are provided by residues 166 to 168 (GAS), serine 191, and isoleucine 232.

Belongs to the tetrahydrofolate dehydrogenase/cyclohydrolase family. In terms of assembly, homodimer.

It catalyses the reaction (6R)-5,10-methylene-5,6,7,8-tetrahydrofolate + NADP(+) = (6R)-5,10-methenyltetrahydrofolate + NADPH. It carries out the reaction (6R)-5,10-methenyltetrahydrofolate + H2O = (6R)-10-formyltetrahydrofolate + H(+). It participates in one-carbon metabolism; tetrahydrofolate interconversion. Catalyzes the oxidation of 5,10-methylenetetrahydrofolate to 5,10-methenyltetrahydrofolate and then the hydrolysis of 5,10-methenyltetrahydrofolate to 10-formyltetrahydrofolate. The sequence is that of Bifunctional protein FolD from Haemophilus ducreyi (strain 35000HP / ATCC 700724).